The chain runs to 493 residues: NAD(P)H dehydrogenase (quinone) (493 aa).

FAD-binding positions include 12–13, 35–37, 42–43, lysine 52, glycine 117, aspartate 317, 324–325, and tyrosine 450; these read PA, DCD, AA, and LA.

Belongs to the class-I pyridine nucleotide-disulfide oxidoreductase family. Homotetramer. FAD serves as cofactor.

The enzyme catalyses a quinone + NADH + H(+) = a quinol + NAD(+). The catalysed reaction is a quinone + NADPH + H(+) = a quinol + NADP(+). In terms of biological role, may contribute to virulence by increasing resistance to reactive oxygen intermediates. It can reduce 2,6-dimethyl-1,4-benzoquinone (DMBQ), 5-hydroxy-1,4-naphthaquinone (5-HNQ) and menadione. This is NAD(P)H dehydrogenase (quinone) (lpdA) from Mycobacterium tuberculosis (strain CDC 1551 / Oshkosh).